A 414-amino-acid chain; its full sequence is Esterase FrsA (414 aa).

The protein belongs to the FrsA family.

It carries out the reaction a carboxylic ester + H2O = an alcohol + a carboxylate + H(+). Catalyzes the hydrolysis of esters. The protein is Esterase FrsA of Shigella sonnei (strain Ss046).